The following is a 560-amino-acid chain: Developmental and secondary metabolism regulator veA (560 aa).

A Velvet domain is found at 35–241 (GRRLWYRMRV…AEQGCRVRIR (207 aa)). The Nuclear localization signal motif lies at 49 to 54 (ERARAC). Disordered stretches follow at residues 49-70 (ERAR…VDPP), 171-197 (KEDK…ATGG), and 250-560 (DGKG…RLRY). The span at 171 to 183 (KEDKDKDKERDVE) shows a compositional bias: basic and acidic residues. Residues 336 to 355 (AAPPQPFAQPPSVPASPVYP) are compositionally biased toward pro residues. Residues 395-405 (PRRESIHHDYR) show a composition bias toward basic and acidic residues. The span at 411-439 (QLPPLPPPPYYPPTPQQSHMPPPQPPQVL) shows a compositional bias: pro residues. Residues 444–453 (IDSNSKSNNR) are compositionally biased toward polar residues. The tract at residues 455-496 (PMPSPTALANSAPRPLASLAPLAPLMQSTSSSAGKGPVHPAT) is PEST. Residues 461-479 (ALANSAPRPLASLAPLAPL) are compositionally biased toward low complexity. Basic and acidic residues-rich tracts occupy residues 508-535 (RAHD…RSED) and 546-560 (RRAD…RLRY).

The protein belongs to the velvet family. VeA subfamily. Component of the heterotrimeric velvet complex composed of laeA, veA and velB; VeA acting as a bridging protein between laeA and velB.

The protein resides in the nucleus. Its subcellular location is the cytoplasm. In terms of biological role, component of the velvet transcription factor complex that controls sexual/asexual developmental ratio in response to light, promoting sexual development in the darkness while stimulating asexual sporulation under illumination. The velvet complex acts as a global regulator for secondary metabolite gene expression. Positively regulates chaetoglobosin A biosynthesis by controlling the expression of core genes of the chaetoglobosin A biosynthetic gene cluster and other relevant regulators in a light-dependent manner. VeA directly regulates transcription factors brlA, laeA, and the chaetoglobosin A cluster-specific transcription regulator cheR. Also directly regulates the expression of one of the chaetoglobosin A cluster cytochrome P450 monooxygenases (cheE or cheG), but only indirectly regulates the expression of the PKS-NRPS hybrid cheA. Moreover, VeA has a significant effect on the asexual spores production, irrespective of light or dark condition. The protein is Developmental and secondary metabolism regulator veA of Chaetomium globosum (strain ATCC 6205 / CBS 148.51 / DSM 1962 / NBRC 6347 / NRRL 1970) (Soil fungus).